Reading from the N-terminus, the 79-residue chain is Sec-independent protein translocase protein TatA (79 aa).

Residues 1-21 traverse the membrane as a helical segment; sequence MGGFTSIWHWVIVLLVIVLLF. Residues 48-79 are disordered; that stretch reads EEEAKNEPKTLDAQVAQTKVHETSEIKSKQES. Basic and acidic residues predominate over residues 66–79; the sequence is KVHETSEIKSKQES.

It belongs to the TatA/E family. As to quaternary structure, the Tat system comprises two distinct complexes: a TatABC complex, containing multiple copies of TatA, TatB and TatC subunits, and a separate TatA complex, containing only TatA subunits. Substrates initially bind to the TatABC complex, which probably triggers association of the separate TatA complex to form the active translocon.

The protein localises to the cell inner membrane. Its function is as follows. Part of the twin-arginine translocation (Tat) system that transports large folded proteins containing a characteristic twin-arginine motif in their signal peptide across membranes. TatA could form the protein-conducting channel of the Tat system. The polypeptide is Sec-independent protein translocase protein TatA (Helicobacter pylori (strain Shi470)).